A 384-amino-acid polypeptide reads, in one-letter code: V-type proton ATPase subunit C (384 aa).

This sequence belongs to the V-ATPase C subunit family. As to quaternary structure, V-ATPase is a heteromultimeric enzyme made up of two complexes: the ATP-hydrolytic V1 complex and the proton translocation V0 complex. The V1 complex consists of three catalytic AB heterodimers that form a heterohexamer, three peripheral stalks each consisting of EG heterodimers, one central rotor including subunits D and F, and the regulatory subunits C and H. The proton translocation complex V0 consists of the proton transport subunit a, a ring of proteolipid subunits c9c'', rotary subunit d, subunits e and f, and the accessory subunits vah-19/Ac45 and vah-20/PRR. Interacts with V-type proton ATPase subunits a1 unc-32, a2 vha-5 and a3 vha-6. Expressed ubiquitously; higher levels are found in gastrointestinal and hypodermal cells, as well as H-shaped excretory cell.

It localises to the cytoplasm. It is found in the membrane. Subunit of the V1 complex of vacuolar(H+)-ATPase (V-ATPase), a multisubunit enzyme composed of a peripheral complex (V1) that hydrolyzes ATP and a membrane integral complex (V0) that translocates protons. V-ATPase is responsible for acidifying and maintaining the pH of intracellular compartments and in some cell types, is targeted to the plasma membrane, where it is responsible for acidifying the extracellular environment. Subunit C is necessary for the assembly of the catalytic sector of the enzyme and is likely to have a specific function in its catalytic activity. Has roles in embryogenesis and ovulation. This Caenorhabditis elegans protein is V-type proton ATPase subunit C.